The primary structure comprises 56 residues: Large ribosomal subunit protein eL37 (56 aa).

The Zn(2+) site is built by Cys19, Cys22, Cys34, and Cys37. The C4-type zinc finger occupies 19-37 (CRRCGRLSYNFNRKTCVAC).

It belongs to the eukaryotic ribosomal protein eL37 family. The cofactor is Zn(2+).

In terms of biological role, binds to the 23S rRNA. This Methanothrix thermoacetophila (strain DSM 6194 / JCM 14653 / NBRC 101360 / PT) (Methanosaeta thermophila) protein is Large ribosomal subunit protein eL37.